We begin with the raw amino-acid sequence, 602 residues long: Probable HECT-type ubiquitin ligase-interacting protein creD (602 aa).

2 disordered regions span residues 375 to 398 and 457 to 499; these read EVDP…GALS and TADY…MATP. Low complexity predominate over residues 463–475; that stretch reads PSSGSNSHSPASP. The segment covering 477-492 has biased composition (basic and acidic residues); the sequence is LSRRPSDEGYRDHDHI.

The protein belongs to the arrestin family. As to quaternary structure, interacts with hulA.

In terms of biological role, component of the regulatory network controlling carbon source utilization through ubiquitination and deubiquitination involving creA, creB, creC, creD and acrB. May be involved in signaling by recognizing appropriately phosphorylated substrates via its arrestin domains and then recruit a HECT-type ubiquitin ligase such as hulA, leading to ubiquitination of the substrate, providing a link between ubiquitination and phosphorylation in protein regulation and stability. This is Probable HECT-type ubiquitin ligase-interacting protein creD (creD) from Aspergillus clavatus (strain ATCC 1007 / CBS 513.65 / DSM 816 / NCTC 3887 / NRRL 1 / QM 1276 / 107).